The following is a 105-amino-acid chain: Large ribosomal subunit protein uL24 (105 aa).

It belongs to the universal ribosomal protein uL24 family. As to quaternary structure, part of the 50S ribosomal subunit.

Its function is as follows. One of two assembly initiator proteins, it binds directly to the 5'-end of the 23S rRNA, where it nucleates assembly of the 50S subunit. In terms of biological role, one of the proteins that surrounds the polypeptide exit tunnel on the outside of the subunit. This Thioalkalivibrio sulfidiphilus (strain HL-EbGR7) protein is Large ribosomal subunit protein uL24.